The following is a 618-amino-acid chain: 1-deoxy-D-xylulose-5-phosphate synthase (618 aa).

Thiamine diphosphate is bound by residues His70 and 111-113 (GHS). Asp142 serves as a coordination point for Mg(2+). Thiamine diphosphate is bound by residues 143–144 (GS), Asn171, Tyr278, and Glu360. Asn171 contributes to the Mg(2+) binding site.

This sequence belongs to the transketolase family. DXPS subfamily. Homodimer. It depends on Mg(2+) as a cofactor. Thiamine diphosphate is required as a cofactor.

The enzyme catalyses D-glyceraldehyde 3-phosphate + pyruvate + H(+) = 1-deoxy-D-xylulose 5-phosphate + CO2. Its pathway is metabolic intermediate biosynthesis; 1-deoxy-D-xylulose 5-phosphate biosynthesis; 1-deoxy-D-xylulose 5-phosphate from D-glyceraldehyde 3-phosphate and pyruvate: step 1/1. Its function is as follows. Catalyzes the acyloin condensation reaction between C atoms 2 and 3 of pyruvate and glyceraldehyde 3-phosphate to yield 1-deoxy-D-xylulose-5-phosphate (DXP). In Helicobacter pylori (strain J99 / ATCC 700824) (Campylobacter pylori J99), this protein is 1-deoxy-D-xylulose-5-phosphate synthase.